The sequence spans 821 residues: Condensin-2 complex subunit kle-2 (821 aa).

Positions 389–426 (VMQNDEPNTSRRPDENYAPMDFDDDFGGGGDDDDDDYI) are disordered. Positions 409–424 (DFDDDFGGGGDDDDDD) are enriched in acidic residues. Residues 529–561 (TAILAEKKRRIKEKTAKIREARIQNMQRKRTAR) adopt a coiled-coil conformation.

The protein belongs to the CND2 H2 (condensin-2 subunit 2) family. In terms of assembly, component of the condensin II complex, which contains the mix-1/SMC2 and smc-4/SMC4 heterodimer, and three non SMC subunits, capg-2, kle-2 and hcp-6 that probably regulate the complex. Within the complex, interacts with mix-1, smc-4, capg-2 and hcp-6.

It is found in the nucleus. It localises to the chromosome. Its subcellular location is the centromere. Its function is as follows. Regulatory subunit of the condensin II complex, a complex that seems to play a role in prophase chromosome condensation and in chromosome segregation in mitosis and in meiosis. The sequence is that of Condensin-2 complex subunit kle-2 (kle-2) from Caenorhabditis elegans.